Here is a 159-residue protein sequence, read N- to C-terminus: Cyclic pyranopterin monophosphate synthase (159 aa).

Substrate-binding positions include 75–77 (LCH) and 113–114 (ME). Residue aspartate 128 is part of the active site.

It belongs to the MoaC family. In terms of assembly, homohexamer; trimer of dimers.

The catalysed reaction is (8S)-3',8-cyclo-7,8-dihydroguanosine 5'-triphosphate = cyclic pyranopterin phosphate + diphosphate. It participates in cofactor biosynthesis; molybdopterin biosynthesis. Functionally, catalyzes the conversion of (8S)-3',8-cyclo-7,8-dihydroguanosine 5'-triphosphate to cyclic pyranopterin monophosphate (cPMP). This is Cyclic pyranopterin monophosphate synthase from Cupriavidus metallidurans (strain ATCC 43123 / DSM 2839 / NBRC 102507 / CH34) (Ralstonia metallidurans).